The sequence spans 193 residues: Segregation and condensation protein B (193 aa).

Belongs to the ScpB family. As to quaternary structure, homodimer. Homodimerization may be required to stabilize the binding of ScpA to the Smc head domains. Component of a cohesin-like complex composed of ScpA, ScpB and the Smc homodimer, in which ScpA and ScpB bind to the head domain of Smc. The presence of the three proteins is required for the association of the complex with DNA.

It localises to the cytoplasm. In terms of biological role, participates in chromosomal partition during cell division. May act via the formation of a condensin-like complex containing Smc and ScpA that pull DNA away from mid-cell into both cell halves. In Streptococcus thermophilus (strain ATCC BAA-250 / LMG 18311), this protein is Segregation and condensation protein B.